Reading from the N-terminus, the 355-residue chain is MQVEVDLPNHSYHIKIEEGCFSEAGDWVSHLWQKQMITIITDSNVEILYGESLVNQLKKQGFTVHVFSFAAGEASKTLEVANRIYGFLAKHHMTRSDGIIALGGGVVGDLAAFVASTYMRGIHFLQIPTSLTAQVDSSIGGKTGVNTSFAKNMVGTFAQPDGVLIDPVTLKTLGNRELVEGMGEVIKYGLIDDIKLWHILEEMDGTIDSILDSALAIIYHSCQVKRKHVLADQYDKGLRMHLNFGHTIGHAIEVHAGYGEIMHGEAVAIGMIQLSRVAERKNLMPRGISQDIYNMCLKFGLPVHYAEWDKDVLFDILSHDKKASGQFIKIVILPQLGSATVHQIPLEEMRDYLEK.

NAD(+) is bound by residues 105 to 109, 129 to 130, Lys142, Lys151, and 169 to 172; these read GVVGD, TS, and TLKT. The Zn(2+) site is built by Glu184, His246, and His263.

Belongs to the sugar phosphate cyclases superfamily. Dehydroquinate synthase family. Requires NAD(+) as cofactor. Co(2+) serves as cofactor. The cofactor is Zn(2+).

It localises to the cytoplasm. The catalysed reaction is 7-phospho-2-dehydro-3-deoxy-D-arabino-heptonate = 3-dehydroquinate + phosphate. The protein operates within metabolic intermediate biosynthesis; chorismate biosynthesis; chorismate from D-erythrose 4-phosphate and phosphoenolpyruvate: step 2/7. In terms of biological role, catalyzes the conversion of 3-deoxy-D-arabino-heptulosonate 7-phosphate (DAHP) to dehydroquinate (DHQ). In Streptococcus agalactiae serotype III (strain NEM316), this protein is 3-dehydroquinate synthase.